The sequence spans 720 residues: NAD(+) hydrolase ApTIR (720 aa).

Residues 1–131 (MRYDAFISYS…AVPPALRGVF (131 aa)) form the TIR domain. NAD(+)-binding positions include 10–11 (SH) and A48. The active site involves E84. Residues 192–211 (GALAVVCALLLLVAGTAVAW) traverse the membrane as a helical segment. Disordered regions lie at residues 231-275 (ATAA…AVAE) and 292-359 (EGIA…EEAV). 2 stretches are compositionally biased toward basic and acidic residues: residues 256–268 (EQQR…EEAR) and 307–359 (AEAR…EEAV). Positions 313-362 (RGVADAEKAKANRAAAEAERQRKIAADEQRKAHEAAAEAERQREEAVKQQ) form a coiled coil. WD repeat units lie at residues 420–459 (GHTA…APRR), 465–504 (SSTA…APRR), 510–549 (GHTD…APRR), 555–594 (DHTA…APRR), 600–639 (GHTA…APRR), 645–684 (GHTA…APRR), and 690–720 (GHTD…CCGM).

The protein resides in the cell membrane. The enzyme catalyses NAD(+) + H2O = ADP-D-ribose + nicotinamide + H(+). In terms of biological role, NAD(+) hydrolase (NADase) that catalyzes cleavage of NAD(+) into ADP-D-ribose (ADPR) and nicotinamide. In Actinoplanes sp. (strain ATCC 31044 / CBS 674.73 / SE50/110), this protein is NAD(+) hydrolase ApTIR.